The sequence spans 274 residues: Large ribosomal subunit protein uL2 (274 aa).

Residues V223–K274 are disordered.

This sequence belongs to the universal ribosomal protein uL2 family. Part of the 50S ribosomal subunit. Forms a bridge to the 30S subunit in the 70S ribosome.

Its function is as follows. One of the primary rRNA binding proteins. Required for association of the 30S and 50S subunits to form the 70S ribosome, for tRNA binding and peptide bond formation. It has been suggested to have peptidyltransferase activity; this is somewhat controversial. Makes several contacts with the 16S rRNA in the 70S ribosome. The protein is Large ribosomal subunit protein uL2 of Colwellia psychrerythraea (strain 34H / ATCC BAA-681) (Vibrio psychroerythus).